A 363-amino-acid chain; its full sequence is Peptide chain release factor 1 (363 aa).

At Q237 the chain carries N5-methylglutamine.

This sequence belongs to the prokaryotic/mitochondrial release factor family. In terms of processing, methylated by PrmC. Methylation increases the termination efficiency of RF1.

Its subcellular location is the cytoplasm. Its function is as follows. Peptide chain release factor 1 directs the termination of translation in response to the peptide chain termination codons UAG and UAA. The protein is Peptide chain release factor 1 (prfA) of Mycoplasma capricolum subsp. capricolum (strain California kid / ATCC 27343 / NCTC 10154).